The primary structure comprises 401 residues: Voltage-gated potassium channel subunit beta-1 (401 aa).

Threonine 90, tryptophan 91, glutamine 97, and aspartate 119 together coordinate NADP(+). The active-site Proton donor/acceptor is the tyrosine 124. The NADP(+) site is built by asparagine 192, serine 222, arginine 223, glutamine 248, tryptophan 277, serine 278, proline 279, leucine 280, alanine 281, cysteine 282, lysine 288, arginine 298, glycine 357, serine 359, glutamine 363, glutamate 366, and asparagine 367.

The protein belongs to the shaker potassium channel beta subunit family. As to quaternary structure, homotetramer. Interaction with tetrameric potassium channel alpha subunits gives rise to a heterooctamer. Identified in potassium channel complexes containing KCNA1, KCNA2, KCNA4, KCNA5, KCNA6, KCNAB1 and KCNAB2. Part of a complex containing KCNA1, KCNA4 and LGI1; interaction with LGI1 inhibits down-regulation of KCNA1 channel activity. Interacts with the dimer formed by GNB1 and GNG2; this enhances KCNA1 binding. Interacts with SQSTM. Detected in brain, in hippocampus and striatum (at protein level). Predominantly expressed in brain. No expression found in heart, skeletal muscle or kidney. In the late embryonic and early neonatal brain, highly expressed in hippocampus, cerebral cortex, caudate putamen, colliculus and cerebellum.

It is found in the cytoplasm. The protein resides in the membrane. Its subcellular location is the cell membrane. It carries out the reaction a primary alcohol + NADP(+) = an aldehyde + NADPH + H(+). The catalysed reaction is a secondary alcohol + NADP(+) = a ketone + NADPH + H(+). In terms of biological role, regulatory subunit of the voltage-gated potassium (Kv) Shaker channels composed of pore-forming and potassium-conducting alpha subunits and of regulatory beta subunits. The beta-1/KCNAB1 cytoplasmic subunit mediates closure of delayed rectifier potassium channels by physically obstructing the pore via its N-terminal domain and increases the speed of channel closure for other family members. Promotes the inactivation of KCNA1, KCNA2, KCNA4, KCNA5 and KCNA6 alpha subunit-containing channels. Displays nicotinamide adenine dinucleotide phosphate (NADPH)-dependent aldoketoreductase activity by catalyzing the NADPH-dependent reduction of a variety of endogenous aldehydes and ketones. The binding of NADPH is required for efficient down-regulation of potassium channel activity. Oxidation of the bound NADPH restrains N-terminal domain from blocking the channel, thereby decreasing N-type inactivation of potassium channel activity. This Mus musculus (Mouse) protein is Voltage-gated potassium channel subunit beta-1.